The sequence spans 2555 residues: Plipastatin synthase subunit C (2555 aa).

The condensation 1 stretch occupies residues 7–306 (IQDIYPLSFM…NTIPIRAQSD (300 aa)). An adenylation 1 region spans residues 491-894 (TYAELDMYAS…SIEGVREAAV (404 aa)). Positions 967-1042 (APRNVTEMKL…GLATVIREGT (76 aa)) constitute a Carrier 1 domain. Serine 1002 is modified (O-(pantetheine 4'-phosphoryl)serine). The segment at 1054–1344 (KQETYPVSSA…NTLALRTRPE (291 aa)) is condensation 2. The interval 1532–1927 (TYEDLNSWAN…QIDGVKEAAV (396 aa)) is adenylation 2. The region spanning 2003-2077 (PPRNELEEQL…DLSPFIRKSE (75 aa)) is the Carrier 2 domain. Serine 2038 is subject to O-(pantetheine 4'-phosphoryl)serine. The epimerization 3 stretch occupies residues 2085-2548 (IQGDVPWTPV…SLTAEDLDSI (464 aa)).

The protein belongs to the ATP-dependent AMP-binding enzyme family. The cofactor is pantetheine 4'-phosphate.

Functionally, this protein is a multifunctional enzyme, able to activate and polymerize the amino acids Glu and Ala/Val as part of the biosynthesis of the lipopeptide antibiotic plipastatin. The Ala/Val residue is further epimerized to the D-isomer form. The activation sites for these amino acids consist of individual domains. The protein is Plipastatin synthase subunit C (ppsC) of Bacillus subtilis (strain 168).